A 719-amino-acid polypeptide reads, in one-letter code: Polyribonucleotide nucleotidyltransferase (719 aa).

2 residues coordinate Mg(2+): D491 and D497. Positions 558–617 constitute a KH domain; that stretch reads PRMLTIKINPEKIRDVIGKGGATIRALTEETGTQIDISDDGTIVIASVDETQAKEAQRRI. An S1 motif domain is found at 627-695; it reads GQIYDGSVLR…DKGRLRLSIK (69 aa).

It belongs to the polyribonucleotide nucleotidyltransferase family. Mg(2+) is required as a cofactor.

Its subcellular location is the cytoplasm. It catalyses the reaction RNA(n+1) + phosphate = RNA(n) + a ribonucleoside 5'-diphosphate. In terms of biological role, involved in mRNA degradation. Catalyzes the phosphorolysis of single-stranded polyribonucleotides processively in the 3'- to 5'-direction. This chain is Polyribonucleotide nucleotidyltransferase, found in Bordetella bronchiseptica (strain ATCC BAA-588 / NCTC 13252 / RB50) (Alcaligenes bronchisepticus).